Here is a 222-residue protein sequence, read N- to C-terminus: Collectrin (222 aa).

The first 14 residues, 1–14 (MLWLLFFLVTAIHA), serve as a signal peptide directing secretion. Residues 15 to 141 (ELCQPGAENA…LAPPMDPSVP (127 aa)) are Extracellular-facing. In terms of domain architecture, Collectrin-like spans 21–222 (AENAFKVRLS…MTEDERLTPL (202 aa)). N-linked (GlcNAc...) asparagine glycans are attached at residues N76 and N93. Residues 142-162 (IWIIIFGVIFCIIIVAIALLI) traverse the membrane as a helical segment. Topologically, residues 163 to 222 (LSGIWQRRRKNKEPSEVDDAEDKCENMITIENGIPSDPLDMKGGHINDAFMTEDERLTPL) are cytoplasmic. Phosphothreonine occurs at positions 214 and 220.

The protein belongs to the CLTRN family. Monomer. Homodimer; dimerization prevents CLTRN cleavage by BACE2. Interacts with SLC6A18; this interaction regulates the trafficking of SLC6A18 to the cell membrane and its amino acid transporter activity. Interacts with SLC6A19; this interaction regulates the trafficking of SLC6A19 to the cell membrane and its amino acid transporter activity. Interacts with SNAPIN. Post-translationally, glycosylated. Glycosylation is required for plasma membrane localization and for its cleavage by BACE2. Proteolytically processed in pancreatic beta cells by BACE2 leading to the generation and extracellular release of soluble CLTRN, and a corresponding cell-associated C-terminal fragment which is later cleaved by gamma-secretase. This shedding process inactivates CLTRN. Three cleavage sites have been identified for BACE2, two clustered sites after Phe-116 and Leu-118 and a more membrane proximal site at Phe-125; the preferred BACE2 cleavage site seems to be between Phe-125 and Leu-126, Phe-116 and Leu-118 act as alternative sites. In terms of tissue distribution, kidney; collecting ducts. Pancreas; beta cells of islets.

The protein localises to the cell membrane. Its function is as follows. Plays an important role in amino acid transport by acting as binding partner of amino acid transporters SLC6A18 and SLC6A19, regulating their trafficking on the cell surface and their amino acid transporter activity. May also play a role in trafficking of amino acid transporters SLC3A1 and SLC7A9 to the renal cortical cell membrane. Regulator of SNARE complex function. Stimulator of beta cell replication. This chain is Collectrin, found in Homo sapiens (Human).